The primary structure comprises 149 residues: Calmodulin-2 (149 aa).

4 EF-hand domains span residues D8–N43, P44–D79, D81–K116, and L117–K149. Positions 21, 23, 25, 27, 32, 57, 59, 61, 63, 68, 94, 96, 98, 105, 130, 132, 134, 136, and 141 each coordinate Ca(2+).

Belongs to the calmodulin family. As to quaternary structure, interacts with KCBP and CIP111. Binds to IQD1 and IQD20.

Its subcellular location is the cytoplasm. It is found in the cytoskeleton. In terms of biological role, calmodulin mediates the control of a large number of enzymes, ion channels and other proteins by Ca(2+). Among the enzymes to be stimulated by the calmodulin-Ca(2+) complex are a number of protein kinases and phosphatases. The protein is Calmodulin-2 (CAM2) of Arabidopsis thaliana (Mouse-ear cress).